Reading from the N-terminus, the 184-residue chain is Secreted protein B (184 aa).

The signal sequence occupies residues 1-19 (MRFILVLVLILGLVSSSFG). Asparagine 129 is a glycosylation site (N-linked (GlcNAc...) asparagine). A Cell attachment site motif is present at residues 164–166 (RGD).

It belongs to the Sct family.

It is found in the secreted. The polypeptide is Secreted protein B (29C) (Dictyostelium discoideum (Social amoeba)).